A 255-amino-acid chain; its full sequence is Aliphatic sulfonates import ATP-binding protein SsuB (255 aa).

Positions 12–233 constitute an ABC transporter domain; sequence LLLNAVSKHY…RLGSVRLAEL (222 aa). Residue 44 to 51 participates in ATP binding; it reads GRSGGGKS.

The protein belongs to the ABC transporter superfamily. Aliphatic sulfonates importer (TC 3.A.1.17.2) family. In terms of assembly, the complex is composed of two ATP-binding proteins (SsuB), two transmembrane proteins (SsuC) and a solute-binding protein (SsuA).

Its subcellular location is the cell inner membrane. The enzyme catalyses ATP + H2O + aliphatic sulfonate-[sulfonate-binding protein]Side 1 = ADP + phosphate + aliphatic sulfonateSide 2 + [sulfonate-binding protein]Side 1.. Functionally, part of the ABC transporter complex SsuABC involved in aliphatic sulfonates import. Responsible for energy coupling to the transport system. The polypeptide is Aliphatic sulfonates import ATP-binding protein SsuB (Escherichia coli (strain K12)).